The primary structure comprises 211 residues: FMN-dependent NADH:quinone oxidoreductase (211 aa).

FMN is bound by residues Ser10, 16-18 (STS), and 138-141 (TQGG).

The protein belongs to the azoreductase type 1 family. In terms of assembly, homodimer. FMN is required as a cofactor.

The enzyme catalyses 2 a quinone + NADH + H(+) = 2 a 1,4-benzosemiquinone + NAD(+). The catalysed reaction is N,N-dimethyl-1,4-phenylenediamine + anthranilate + 2 NAD(+) = 2-(4-dimethylaminophenyl)diazenylbenzoate + 2 NADH + 2 H(+). Functionally, quinone reductase that provides resistance to thiol-specific stress caused by electrophilic quinones. In terms of biological role, also exhibits azoreductase activity. Catalyzes the reductive cleavage of the azo bond in aromatic azo compounds to the corresponding amines. In Frankia alni (strain DSM 45986 / CECT 9034 / ACN14a), this protein is FMN-dependent NADH:quinone oxidoreductase.